The sequence spans 296 residues: MPLVRVPATTANLGPGFDTLGMALNLFDELKIEESSSPEIIITGEGEGTIPRGQENIAYRAARAVFAKVGRPPVPLKLEMHNSIPVARGLGSSAAALVGAIVGTNAILGGPLGPAELVNLATTLEGHPDNVAPAILGGLVASARDGEQVICRRLELPPGLVTVVAIPQFTLSTRISRGVLPAKVDLEDAVFNISRVAVLLAAVATGDLDLMGRMMVDKLHQPYRLPLIPGMAEVFAAAREAGALAVTLSGSGPTVIAFCRGRQPKVGPAMAAAFARKGVKCTVKELAPCNHGAVVI.

85-95 (PVARGLGSSAA) contributes to the ATP binding site.

Belongs to the GHMP kinase family. Homoserine kinase subfamily.

It localises to the cytoplasm. It carries out the reaction L-homoserine + ATP = O-phospho-L-homoserine + ADP + H(+). It participates in amino-acid biosynthesis; L-threonine biosynthesis; L-threonine from L-aspartate: step 4/5. Functionally, catalyzes the ATP-dependent phosphorylation of L-homoserine to L-homoserine phosphate. In Moorella thermoacetica (strain ATCC 39073 / JCM 9320), this protein is Homoserine kinase.